The sequence spans 271 residues: Plasmanylethanolamine desaturase 1 (271 aa).

The next 3 membrane-spanning stretches (helical) occupy residues 48 to 68 (WCCV…LLLL), 75 to 95 (PLVM…SGLV), and 162 to 182 (VLEQ…FGTF). A Histidine box-1 motif is present at residues 187-191 (HKWSH). Residues 214-218 (HHRIH) carry the Histidine box-2 motif.

Belongs to the fatty acid desaturase CarF family.

It localises to the endoplasmic reticulum membrane. The enzyme catalyses a 1-(1,2-saturated alkyl)-2-acyl-sn-glycero-3-phosphoethanolamine + 2 Fe(II)-[cytochrome b5] + O2 + 2 H(+) = a 1-O-(1Z-alkenyl)-2-acyl-sn-glycero-3-phosphoethanolamine + 2 Fe(III)-[cytochrome b5] + 2 H2O. The catalysed reaction is a 1-O-hexadecyl-2-acyl-sn-glycero-3-phosphoethanolamine + 2 Fe(II)-[cytochrome b5] + O2 + 2 H(+) = a 1-O-(1Z-hexadecenyl)-2-acyl-sn-glycero-3-phosphoethanolamine + 2 Fe(III)-[cytochrome b5] + 2 H2O. It catalyses the reaction a 1-O-octadecyl-2-acyl-sn-glycero-3-phosphoethanolamine + 2 Fe(II)-[cytochrome b5] + O2 + 2 H(+) = a 1-O-(1Z-octadecenyl)-2-acyl-sn-glycero-3-phosphoethanolamine + 2 Fe(III)-[cytochrome b5] + 2 H2O. It carries out the reaction a 1-O-(9Z-octadecenyl)-2-acyl-sn-glycero-3-phosphoethanolamine + 2 Fe(II)-[cytochrome b5] + O2 + 2 H(+) = a 1-O-(1Z,9Z-octadecadienyl)-2-acyl-sn-glycero-3-phosphoethanolamine + 2 Fe(III)-[cytochrome b5] + 2 H2O. It functions in the pathway lipid metabolism; fatty acid metabolism. Its function is as follows. Plasmanylethanolamine desaturase involved in plasmalogen biogenesis in the endoplasmic reticulum membrane. Plasmalogens are glycerophospholipids with a hydrocarbon chain linked by a vinyl ether bond at the glycerol sn-1 position, and are involved in antioxidative and signaling mechanisms. The polypeptide is Plasmanylethanolamine desaturase 1 (Bos taurus (Bovine)).